Reading from the N-terminus, the 115-residue chain is Large ribosomal subunit protein bL19 (115 aa).

Belongs to the bacterial ribosomal protein bL19 family.

This protein is located at the 30S-50S ribosomal subunit interface and may play a role in the structure and function of the aminoacyl-tRNA binding site. The polypeptide is Large ribosomal subunit protein bL19 (Brevibacillus brevis (strain 47 / JCM 6285 / NBRC 100599)).